A 954-amino-acid chain; its full sequence is Glycine dehydrogenase (decarboxylating) (954 aa).

Lys-704 carries the post-translational modification N6-(pyridoxal phosphate)lysine.

Belongs to the GcvP family. As to quaternary structure, the glycine cleavage system is composed of four proteins: P, T, L and H. It depends on pyridoxal 5'-phosphate as a cofactor.

The catalysed reaction is N(6)-[(R)-lipoyl]-L-lysyl-[glycine-cleavage complex H protein] + glycine + H(+) = N(6)-[(R)-S(8)-aminomethyldihydrolipoyl]-L-lysyl-[glycine-cleavage complex H protein] + CO2. Its function is as follows. The glycine cleavage system catalyzes the degradation of glycine. The P protein binds the alpha-amino group of glycine through its pyridoxal phosphate cofactor; CO(2) is released and the remaining methylamine moiety is then transferred to the lipoamide cofactor of the H protein. In Vibrio cholerae serotype O1 (strain ATCC 39541 / Classical Ogawa 395 / O395), this protein is Glycine dehydrogenase (decarboxylating).